A 388-amino-acid chain; its full sequence is 1-deoxy-D-xylulose 5-phosphate reductoisomerase (388 aa).

NADPH-binding residues include threonine 15, glycine 16, serine 17, isoleucine 18, and asparagine 127. Lysine 128 lines the 1-deoxy-D-xylulose 5-phosphate pocket. Position 129 (glutamate 129) interacts with NADPH. Aspartate 153 is a Mn(2+) binding site. 1-deoxy-D-xylulose 5-phosphate-binding residues include serine 154, glutamate 155, serine 179, and histidine 202. Position 155 (glutamate 155) interacts with Mn(2+). Glycine 208 is a binding site for NADPH. 1-deoxy-D-xylulose 5-phosphate-binding residues include serine 215, asparagine 220, lysine 221, and glutamate 224. Glutamate 224 serves as a coordination point for Mn(2+).

It belongs to the DXR family. The cofactor is Mg(2+). Mn(2+) is required as a cofactor.

It carries out the reaction 2-C-methyl-D-erythritol 4-phosphate + NADP(+) = 1-deoxy-D-xylulose 5-phosphate + NADPH + H(+). It functions in the pathway isoprenoid biosynthesis; isopentenyl diphosphate biosynthesis via DXP pathway; isopentenyl diphosphate from 1-deoxy-D-xylulose 5-phosphate: step 1/6. In terms of biological role, catalyzes the NADPH-dependent rearrangement and reduction of 1-deoxy-D-xylulose-5-phosphate (DXP) to 2-C-methyl-D-erythritol 4-phosphate (MEP). The chain is 1-deoxy-D-xylulose 5-phosphate reductoisomerase from Bacteroides fragilis (strain YCH46).